Consider the following 1012-residue polypeptide: Beta-alanine-activating enzyme (1012 aa).

Residues threonine 177–lysine 185, aspartate 411, arginine 426, and lysine 516 each bind ATP.

This sequence belongs to the ATP-dependent AMP-binding enzyme family.

Its function is as follows. Covalently binds beta-alanine in an ATP-dependent manner to form a thioester bond with its phosphopantetheine group and transfers it to an, as yet, unknown acceptor. May be required for a post-translational protein modification or for post-transcriptional modification of an RNA. The polypeptide is Beta-alanine-activating enzyme (Drosophila melanogaster (Fruit fly)).